A 92-amino-acid polypeptide reads, in one-letter code: MSRARAHVVVSGKVQGVYFRSETRDQALALGVTGWIRNRTDGTVEGVFEGDREMVEKLVRWCWQGPPAAEVSNVQVEWQDYTGEFSGFKIAF.

The 88-residue stretch at 5–92 folds into the Acylphosphatase-like domain; it reads RAHVVVSGKV…GEFSGFKIAF (88 aa). Catalysis depends on residues Arg-20 and Asn-38.

This sequence belongs to the acylphosphatase family.

The catalysed reaction is an acyl phosphate + H2O = a carboxylate + phosphate + H(+). The protein is Acylphosphatase (acyP) of Pelotomaculum thermopropionicum (strain DSM 13744 / JCM 10971 / SI).